The following is a 105-amino-acid chain: Thioredoxin (105 aa).

The 105-residue stretch at 1-105 (MASNVTDKSF…SLIEWINNNI (105 aa)) folds into the Thioredoxin domain. A disulfide bridge links Cys-30 with Cys-33.

It belongs to the thioredoxin family.

Functionally, component of the thioredoxin-thioredoxin reductase system. Participates in various redox reactions through the reversible oxidation of its active center dithiol to a disulfide and catalyzes dithiol-disulfide exchange reactions. This chain is Thioredoxin (trxA), found in Rickettsia bellii (strain RML369-C).